The chain runs to 435 residues: Xylose isomerase (435 aa).

Active-site residues include histidine 100 and aspartate 103. Mg(2+) contacts are provided by glutamate 231, glutamate 267, histidine 270, aspartate 295, aspartate 306, aspartate 308, and aspartate 338.

Belongs to the xylose isomerase family. Homotetramer. It depends on Mg(2+) as a cofactor.

Its subcellular location is the cytoplasm. The catalysed reaction is alpha-D-xylose = alpha-D-xylulofuranose. This chain is Xylose isomerase, found in Brucella anthropi (strain ATCC 49188 / DSM 6882 / CCUG 24695 / JCM 21032 / LMG 3331 / NBRC 15819 / NCTC 12168 / Alc 37) (Ochrobactrum anthropi).